We begin with the raw amino-acid sequence, 534 residues long: 2,3-bisphosphoglycerate-independent phosphoglycerate mutase (534 aa).

Mn(2+) is bound by residues Asp15 and Ser65. The active-site Phosphoserine intermediate is Ser65. Residues His126, 156–157 (RD), Arg188, Arg194, 260–263 (RPDR), and Lys333 contribute to the substrate site. Mn(2+)-binding residues include Asp400, His404, Asp441, His442, and His459.

This sequence belongs to the BPG-independent phosphoglycerate mutase family. Monomer. Mn(2+) is required as a cofactor.

It carries out the reaction (2R)-2-phosphoglycerate = (2R)-3-phosphoglycerate. It participates in carbohydrate degradation; glycolysis; pyruvate from D-glyceraldehyde 3-phosphate: step 3/5. Catalyzes the interconversion of 2-phosphoglycerate and 3-phosphoglycerate. In Acaryochloris marina (strain MBIC 11017), this protein is 2,3-bisphosphoglycerate-independent phosphoglycerate mutase.